The sequence spans 303 residues: D-alanine--D-alanine ligase (303 aa).

The 197-residue stretch at 104 to 300 folds into the ATP-grasp domain; that stretch reads KLLWNAVGLP…FEKLVERVLE (197 aa). Residue 132-187 participates in ATP binding; that stretch reads IAKLSLPVFVKPSSEGSSVGVFKVKTKEELLPAITAALEFDTIVLVEEFLTGAEYS. The Mg(2+) site is built by aspartate 254, glutamate 267, and asparagine 269.

The protein belongs to the D-alanine--D-alanine ligase family. Mg(2+) serves as cofactor. The cofactor is Mn(2+).

The protein localises to the cytoplasm. It catalyses the reaction 2 D-alanine + ATP = D-alanyl-D-alanine + ADP + phosphate + H(+). It participates in cell wall biogenesis; peptidoglycan biosynthesis. Functionally, cell wall formation. This is D-alanine--D-alanine ligase from Haemophilus ducreyi (strain 35000HP / ATCC 700724).